A 294-amino-acid polypeptide reads, in one-letter code: Protoheme IX farnesyltransferase (294 aa).

Transmembrane regions (helical) follow at residues 24-44, 48-68, 96-116, 118-138, 145-165, 172-192, 211-231, 241-263, and 268-288; these read VVLLMLLTVIVGMYLAAPGWV, LIAFTLLGIGLCAGSAAAINH, ALWFAVIIGLMGLSLLILFVN, LTALLTFITLIGYAGVYTGYL, NIVIGGLAGAAPPLLGWTAVT, ALLLVLIIFTWTPPHFWALAI, GIQFTKLNIYLYTVLLLVVSL, WIYLLGALILGIRFLVWAHKLYF, and VVAMQTFRFSILYLMLLFVFL.

The protein belongs to the UbiA prenyltransferase family. Protoheme IX farnesyltransferase subfamily.

It localises to the cell inner membrane. The enzyme catalyses heme b + (2E,6E)-farnesyl diphosphate + H2O = Fe(II)-heme o + diphosphate. It functions in the pathway porphyrin-containing compound metabolism; heme O biosynthesis; heme O from protoheme: step 1/1. Converts heme B (protoheme IX) to heme O by substitution of the vinyl group on carbon 2 of heme B porphyrin ring with a hydroxyethyl farnesyl side group. This Legionella pneumophila (strain Lens) protein is Protoheme IX farnesyltransferase.